Consider the following 95-residue polypeptide: Aspartyl/glutamyl-tRNA(Asn/Gln) amidotransferase subunit C (95 aa).

This sequence belongs to the GatC family. Heterotrimer of A, B and C subunits.

It carries out the reaction L-glutamyl-tRNA(Gln) + L-glutamine + ATP + H2O = L-glutaminyl-tRNA(Gln) + L-glutamate + ADP + phosphate + H(+). The catalysed reaction is L-aspartyl-tRNA(Asn) + L-glutamine + ATP + H2O = L-asparaginyl-tRNA(Asn) + L-glutamate + ADP + phosphate + 2 H(+). In terms of biological role, allows the formation of correctly charged Asn-tRNA(Asn) or Gln-tRNA(Gln) through the transamidation of misacylated Asp-tRNA(Asn) or Glu-tRNA(Gln) in organisms which lack either or both of asparaginyl-tRNA or glutaminyl-tRNA synthetases. The reaction takes place in the presence of glutamine and ATP through an activated phospho-Asp-tRNA(Asn) or phospho-Glu-tRNA(Gln). This is Aspartyl/glutamyl-tRNA(Asn/Gln) amidotransferase subunit C from Gluconacetobacter diazotrophicus (strain ATCC 49037 / DSM 5601 / CCUG 37298 / CIP 103539 / LMG 7603 / PAl5).